Reading from the N-terminus, the 337-residue chain is MSVEVFYDDDADLGLIQGRTVAVIGYGSQGHAHALSLRDSGVDVVIGLPAGSKSRPKAEEQGLRVRTPAEAAAEADIIMILAPDTAQRALYTESIAPHLAAGKALFFGHGFNIRYGLIQPPADVDVAMVAPKGPGHLVRRQYVDGKGVPCLVAVEQDASGNAFGLALAYAKAIGGTRAGAIRTTFTEETETDLFGEQAVLCGGAAALVQTGFEVLTEAGYAPEVAYFECLHELKLIVDLMYEGGIARMRYSISDTAEYGDLSRGPRVIDSQVKERMRAILGEIRSGEFAREWVAEDEAGRPNFAKWRAESAAHPIEETGSKLRGMMSWVDRPITETA.

A KARI N-terminal Rossmann domain is found at 3–183 (VEVFYDDDAD…GGTRAGAIRT (181 aa)). Residues 26–29 (YGSQ), serine 52, serine 54, and 84–87 (DTAQ) contribute to the NADP(+) site. Residue histidine 109 is part of the active site. Residue glycine 135 participates in NADP(+) binding. In terms of domain architecture, KARI C-terminal knotted spans 184–329 (TFTEETETDL…SKLRGMMSWV (146 aa)). Positions 192, 196, 228, and 232 each coordinate Mg(2+). A substrate-binding site is contributed by serine 253.

It belongs to the ketol-acid reductoisomerase family. Requires Mg(2+) as cofactor.

It catalyses the reaction (2R)-2,3-dihydroxy-3-methylbutanoate + NADP(+) = (2S)-2-acetolactate + NADPH + H(+). It carries out the reaction (2R,3R)-2,3-dihydroxy-3-methylpentanoate + NADP(+) = (S)-2-ethyl-2-hydroxy-3-oxobutanoate + NADPH + H(+). It functions in the pathway amino-acid biosynthesis; L-isoleucine biosynthesis; L-isoleucine from 2-oxobutanoate: step 2/4. The protein operates within amino-acid biosynthesis; L-valine biosynthesis; L-valine from pyruvate: step 2/4. Its function is as follows. Involved in the biosynthesis of branched-chain amino acids (BCAA). Catalyzes an alkyl-migration followed by a ketol-acid reduction of (S)-2-acetolactate (S2AL) to yield (R)-2,3-dihydroxy-isovalerate. In the isomerase reaction, S2AL is rearranged via a Mg-dependent methyl migration to produce 3-hydroxy-3-methyl-2-ketobutyrate (HMKB). In the reductase reaction, this 2-ketoacid undergoes a metal-dependent reduction by NADPH to yield (R)-2,3-dihydroxy-isovalerate. This chain is Ketol-acid reductoisomerase (NADP(+)), found in Salinispora arenicola (strain CNS-205).